The following is a 726-amino-acid chain: Catalase-peroxidase (726 aa).

Residues 1–33 are disordered; the sequence is MSTTDDTHNTLSTGKCPFHQGGHDRSAGAGTAS. The segment at residues 105–226 is a cross-link (tryptophyl-tyrosyl-methioninium (Trp-Tyr) (with M-252)); that stretch reads WHGAGTYRSI…LGATEMGLIY (122 aa). Catalysis depends on His106, which acts as the Proton acceptor. The segment at residues 226–252 is a cross-link (tryptophyl-tyrosyl-methioninium (Tyr-Met) (with W-105)); that stretch reads YVNPEGPDHSGEPLSAAAAIRATFGNM. His267 lines the heme b pocket.

Belongs to the peroxidase family. Peroxidase/catalase subfamily. As to quaternary structure, homodimer or homotetramer. It depends on heme b as a cofactor. Post-translationally, formation of the three residue Trp-Tyr-Met cross-link is important for the catalase, but not the peroxidase activity of the enzyme.

The catalysed reaction is H2O2 + AH2 = A + 2 H2O. The enzyme catalyses 2 H2O2 = O2 + 2 H2O. Its function is as follows. Bifunctional enzyme with both catalase and broad-spectrum peroxidase activity. This Salmonella paratyphi A (strain ATCC 9150 / SARB42) protein is Catalase-peroxidase.